A 234-amino-acid polypeptide reads, in one-letter code: BTB/POZ domain-containing protein KCTD5 (234 aa).

Position 2 is an N-acetylalanine (Ala2). Position 10 is a phosphoserine (Ser10). One can recognise a BTB domain in the interval 44–146 (KWVRLNVGGT…LVKDKIRERD (103 aa)). Residues 213–234 (PYGTASEPSEKAKILQERGSRM) are disordered. Residues 220–234 (PSEKAKILQERGSRM) are compositionally biased toward basic and acidic residues.

In terms of assembly, homopentamer. Interacts (via C-terminus) with GRASP55/GORASP2. Interacts with CUL3 and with ubiquitinated proteins. Interacts with CRY1. (Microbial infection) Interacts with adeno-associated virus 2 (AAV-2) REP proteins.

Its subcellular location is the cytoplasm. The protein resides in the cytosol. The protein localises to the nucleus. Its interaction with CUL3 suggests that it may act as a substrate adapter in some E3 ligase complex. Does not affect the function of Kv channel Kv2.1/KCNB1, Kv1.2/KCNA2, Kv4.2/KCND2 and Kv3.4/KCNC4. This is BTB/POZ domain-containing protein KCTD5 (KCTD5) from Homo sapiens (Human).